The following is a 312-amino-acid chain: Calcium-independent mitochondrial carrier protein SCaMC-3L (312 aa).

Solcar repeat units follow at residues Gly27–Phe113, Gln121–Leu206, and Pro217–Thr304. 6 helical membrane passes run Leu33–Leu50, Gly88–Cys107, Ser131–Met144, Tyr182–Tyr200, Gly219–Val243, and Gly279–Tyr298.

This sequence belongs to the mitochondrial carrier (TC 2.A.29) family. As to expression, mainly expressed in testis and at lesser levels in brain.

The protein localises to the mitochondrion inner membrane. It carries out the reaction Mg(2+)(out) + phosphate(in) + ATP(out) = Mg(2+)(in) + phosphate(out) + ATP(in). The enzyme catalyses ADP(out) + phosphate(in) + H(+)(out) = ADP(in) + phosphate(out) + H(+)(in). Functionally, calcium-independent ATP-Mg/Pi exchanger that catalyzes the electroneutral exchange of Mg-ATP or free ADP against an hydrogenphosphate and participates in the net transport of adenine nucleotides across the mitochondria inner membrane. The protein is Calcium-independent mitochondrial carrier protein SCaMC-3L of Mus musculus (Mouse).